A 301-amino-acid polypeptide reads, in one-letter code: MNSPYRGRFAPSPTGPLHFGSLVAAVGSYLDARTQGGEWLVRMEDVDTPRNVPGAADDILRTLDAFGFEWDGPVLYQSKRFEAYAEALDRLKQAGLLYGCACSRKEIADSATHAAIDGGLAYPGTCRGGLPAGRQARAWRLRVDAGETAFIDRLQGRVAQHLEHDVGDFVLRRADGLFAYQLAVVVDDAWQGINAVVRGADLLASTPRQIWLQRCLGYLELTYAHLPVAANPAGEKLSKQTRAQALSVDRAAAELVRALRFLGQGVPEALARGAAADVWAWAGEHWTFDAVPRQSLILLPA.

Residues 8 to 12 and Glu-44 each bind L-glutamate; that span reads RFAPS. The 'HIGH' region motif lies at 11 to 21; sequence PSPTGPLHFGS. The Zn(2+) site is built by Cys-100, Cys-102, Tyr-122, and Cys-126. L-glutamate contacts are provided by Tyr-180 and Arg-198. The 'KMSKS' region motif lies at 236-240; that stretch reads KLSKQ. Lys-239 is a binding site for ATP.

It belongs to the class-I aminoacyl-tRNA synthetase family. GluQ subfamily. It depends on Zn(2+) as a cofactor.

Its function is as follows. Catalyzes the tRNA-independent activation of glutamate in presence of ATP and the subsequent transfer of glutamate onto a tRNA(Asp). Glutamate is transferred on the 2-amino-5-(4,5-dihydroxy-2-cyclopenten-1-yl) moiety of the queuosine in the wobble position of the QUC anticodon. The protein is Glutamyl-Q tRNA(Asp) synthetase of Dechloromonas aromatica (strain RCB).